A 424-amino-acid chain; its full sequence is Enolase (424 aa).

Q163 contacts (2R)-2-phosphoglycerate. The active-site Proton donor is E204. The Mg(2+) site is built by D241, E284, and D311. (2R)-2-phosphoglycerate is bound by residues K336, R365, S366, and K387. The active-site Proton acceptor is K336.

This sequence belongs to the enolase family. The cofactor is Mg(2+).

It localises to the cytoplasm. Its subcellular location is the secreted. The protein resides in the cell surface. The enzyme catalyses (2R)-2-phosphoglycerate = phosphoenolpyruvate + H2O. The protein operates within carbohydrate degradation; glycolysis; pyruvate from D-glyceraldehyde 3-phosphate: step 4/5. Its function is as follows. Catalyzes the reversible conversion of 2-phosphoglycerate (2-PG) into phosphoenolpyruvate (PEP). It is essential for the degradation of carbohydrates via glycolysis. The chain is Enolase from Dictyoglomus turgidum (strain DSM 6724 / Z-1310).